Consider the following 127-residue polypeptide: MSVTTWNLNGTKHHVLICNGSSCMRKGGEEATQAIRNKVAELNLDEAVHTTRTCNGRCKDAPVAIVYPSGDWYKQVTEKVAHRIVEEHLAGGCSLKESLIYEYDQKGFVSPENSDSIEGIDKVKSNA.

Residues Cys23, Cys54, and Cys58 each coordinate [2Fe-2S] cluster.

The protein belongs to the 2Fe2S Shethna-type ferredoxin family. The cofactor is [2Fe-2S] cluster.

Ferredoxins are iron-sulfur proteins that transfer electrons in a wide variety of metabolic reactions. The protein is Putative 2Fe-2S ferredoxin (cbiW) of Priestia megaterium (Bacillus megaterium).